A 163-amino-acid polypeptide reads, in one-letter code: MVDLSFNATVFMQMFHFLLMLVVLRLFAYRPLMNVIEQRQAYIADEIEAAEKQKAAAAELRSQLEADLAKAREEAKAIVARATKASDEQAQAIMEQARTEAQRLKEEALAEIGREREKAIAQLKDEVASLAVLVAAKVVKDGLTIDAQHNLVQNAIKEVGQLQ.

The helical transmembrane segment at 10–29 (VFMQMFHFLLMLVVLRLFAY) threads the bilayer.

This sequence belongs to the ATPase B chain family. As to quaternary structure, F-type ATPases have 2 components, F(1) - the catalytic core - and F(0) - the membrane proton channel. F(1) has five subunits: alpha(3), beta(3), gamma(1), delta(1), epsilon(1). F(0) has three main subunits: a(1), b(2) and c(10-14). The alpha and beta chains form an alternating ring which encloses part of the gamma chain. F(1) is attached to F(0) by a central stalk formed by the gamma and epsilon chains, while a peripheral stalk is formed by the delta and b chains.

The protein localises to the cell membrane. In terms of biological role, f(1)F(0) ATP synthase produces ATP from ADP in the presence of a proton or sodium gradient. F-type ATPases consist of two structural domains, F(1) containing the extramembraneous catalytic core and F(0) containing the membrane proton channel, linked together by a central stalk and a peripheral stalk. During catalysis, ATP synthesis in the catalytic domain of F(1) is coupled via a rotary mechanism of the central stalk subunits to proton translocation. Its function is as follows. Component of the F(0) channel, it forms part of the peripheral stalk, linking F(1) to F(0). This Desulforudis audaxviator (strain MP104C) protein is ATP synthase subunit b.